The sequence spans 788 residues: Endonuclease MutS2 (788 aa).

332–339 contributes to the ATP binding site; sequence GPNTGGKT. Residues 713-788 form the Smr domain; it reads VDLRGMDAEE…GTGVTVVELK (76 aa).

It belongs to the DNA mismatch repair MutS family. MutS2 subfamily. In terms of assembly, homodimer. Binds to stalled ribosomes, contacting rRNA.

Its function is as follows. Endonuclease that is involved in the suppression of homologous recombination and thus may have a key role in the control of bacterial genetic diversity. Functionally, acts as a ribosome collision sensor, splitting the ribosome into its 2 subunits. Detects stalled/collided 70S ribosomes which it binds and splits by an ATP-hydrolysis driven conformational change. Acts upstream of the ribosome quality control system (RQC), a ribosome-associated complex that mediates the extraction of incompletely synthesized nascent chains from stalled ribosomes and their subsequent degradation. Probably generates substrates for RQC. The polypeptide is Endonuclease MutS2 (Clostridium botulinum (strain ATCC 19397 / Type A)).